The following is a 201-amino-acid chain: Pyridoxine/pyridoxamine 5'-phosphate oxidase (201 aa).

FMN-binding positions include 49–54, 64–65, Lys-71, and Gln-93; these read RMVLLK and YT. A substrate-binding site is contributed by Lys-54. Substrate contacts are provided by Tyr-111, Arg-115, and Ser-119. Residues 128–129 and Trp-172 each bind FMN; that span reads QS. 178-180 is a substrate binding site; that stretch reads RLH. Arg-182 provides a ligand contact to FMN.

It belongs to the pyridoxamine 5'-phosphate oxidase family. Homodimer. Requires FMN as cofactor.

It carries out the reaction pyridoxamine 5'-phosphate + O2 + H2O = pyridoxal 5'-phosphate + H2O2 + NH4(+). It catalyses the reaction pyridoxine 5'-phosphate + O2 = pyridoxal 5'-phosphate + H2O2. It functions in the pathway cofactor metabolism; pyridoxal 5'-phosphate salvage; pyridoxal 5'-phosphate from pyridoxamine 5'-phosphate: step 1/1. It participates in cofactor metabolism; pyridoxal 5'-phosphate salvage; pyridoxal 5'-phosphate from pyridoxine 5'-phosphate: step 1/1. Catalyzes the oxidation of either pyridoxine 5'-phosphate (PNP) or pyridoxamine 5'-phosphate (PMP) into pyridoxal 5'-phosphate (PLP). The polypeptide is Pyridoxine/pyridoxamine 5'-phosphate oxidase (Ruegeria sp. (strain TM1040) (Silicibacter sp.)).